We begin with the raw amino-acid sequence, 402 residues long: Plasminogen activator inhibitor 1 (402 aa).

Positions 1–22 (MQMSSALACLILGLVLVSGKGF) are cleaved as a signal peptide. 3 N-linked (GlcNAc...) asparagine glycosylation sites follow: Asn232, Asn288, and Asn352.

This sequence belongs to the serpin family. In terms of assembly, forms a heterodimer with TMPRSS7. Interacts with VTN. Binds LRP1B; binding is followed by internalization and degradation. Interacts with PPP1CB. In complex with PLAU/uPA, interacts with PLAUR/uPAR. Interacts with SORL1 and LRP1, either alone or in complex with PLAU; these interactions are abolished in the presence of LRPAP1/RAP. The ternary complex composed of PLAUR-PLAU-PAI1 also interacts with SORL1. Interacts with PLAT/tPA. Also interacts with SORL1, when complexed to PLAT/tPA.

The protein localises to the secreted. Its function is as follows. Serine protease inhibitor. Inhibits TMPRSS7. Is a primary inhibitor of tissue-type plasminogen activator (PLAT) and urokinase-type plasminogen activator (PLAU). As PLAT inhibitor, it is required for fibrinolysis down-regulation and is responsible for the controlled degradation of blood clots. As PLAU inhibitor, it is involved in the regulation of cell adhesion and spreading. Acts as a regulator of cell migration, independently of its role as protease inhibitor. It is required for stimulation of keratinocyte migration during cutaneous injury repair. Involved in cellular and replicative senescence. Plays a role in alveolar type 2 cells senescence in the lung. Is involved in the regulation of cementogenic differentiation of periodontal ligament stem cells, and regulates odontoblast differentiation and dentin formation during odontogenesis. The polypeptide is Plasminogen activator inhibitor 1 (Serpine1) (Mus musculus (Mouse)).